A 1333-amino-acid polypeptide reads, in one-letter code: snRNA-activating protein complex subunit 4 (1333 aa).

Residues 29–84 (HFEVSESSLSSDSEADSLPDEDLETAGAPILEEEGSSESSNDEEDPKDKALPEDPE) are disordered. Acidic residues-rich tracts occupy residues 41 to 52 (SEADSLPDEDLE) and 59 to 73 (LEEE…DEED). Ser68 carries the phosphoserine modification. An SNAPC5-binding region spans residues 84-133 (ETCLQLNMVYQEVIREKLAEVSQLLAQNQEQQEEILFDLSGTKCPKVKDG). One can recognise a Myb-like 1 domain in the interval 250-288 (EEALLGNRLDSHDWEKISNINFEGARSAEEIRKFWQSSE). In terms of domain architecture, HTH myb-type 1 spans 289 to 343 (HPSISKQEWSTEEVERLKAIAATHGHLEWHLVAEELGTSRSAFQCLQKFQQYNKT). The H-T-H motif DNA-binding region spans 317–341 (WHLVAEELGTSRSAFQCLQKFQQYN). A Myb-like 2 domain is found at 344-395 (LKRKEWTEEEDHMLTQLVQEMRVGNHIPYRKIVYFMEGRDSMQLIYRWTKSL). 2 consecutive HTH myb-type domains span residues 396-451 (DPSL…HFSL) and 452-503 (KKGR…RKKQ). 2 consecutive DNA-binding regions (H-T-H motif) follow at residues 424-447 (WFKI…IRRL) and 476-499 (WARI…KILA). Over residues 503–515 (QHLQRKRGQRPRH) the composition is skewed to basic residues. Disordered regions lie at residues 503–558 (QHLQ…LEKS), 662–702 (LMKE…QNKQ), 811–842 (NAKN…LGSC), and 1079–1117 (LPSP…PEKA). A compositionally biased stretch (low complexity) spans 516–546 (SSQWSSSGSSSSSSEDYGSSSGSDGSSGSEN). 2 stretches are compositionally biased toward polar residues: residues 672–686 (LPSS…NNTA) and 811–826 (NAKN…TGEQ). An SNAPC2-binding region spans residues 1131–1247 (AIVTWLKGCQ…NSIPTTLSPD (117 aa)). A phosphoserine mark is found at Ser1252, Ser1254, Ser1301, and Ser1309. Residues 1282-1333 (PAAPDPVQSHLVSPGQRAPSPGEVSAPSPLDASDGLDDLNVLRTRRARHSRR) form a disordered region. Residues 1324 to 1333 (RTRRARHSRR) are compositionally biased toward basic residues.

In terms of assembly, part of the SNAPc composed of 5 subunits: SNAPC1, SNAPC2, SNAPC3, SNAPC4 and SNAPC5. SNAPC4 interacts with SNAPC1, SNAPC2, SNAPC5, BRF2 and TBP.

It localises to the nucleus. Its function is as follows. Part of the SNAPc complex required for the transcription of both RNA polymerase II and III small-nuclear RNA genes. Binds to the proximal sequence element (PSE), a non-TATA-box basal promoter element common to these 2 types of genes. Recruits TBP and BRF2 to the U6 snRNA TATA box. In Mus musculus (Mouse), this protein is snRNA-activating protein complex subunit 4.